The sequence spans 235 residues: tRNA pseudouridine synthase B (235 aa).

Catalysis depends on Asp45, which acts as the Nucleophile.

Belongs to the pseudouridine synthase TruB family. Type 1 subfamily.

The catalysed reaction is uridine(55) in tRNA = pseudouridine(55) in tRNA. In terms of biological role, responsible for synthesis of pseudouridine from uracil-55 in the psi GC loop of transfer RNAs. This is tRNA pseudouridine synthase B from Chlamydia abortus (strain DSM 27085 / S26/3) (Chlamydophila abortus).